The chain runs to 508 residues: Photosystem II CP47 reaction center protein (508 aa).

The next 6 helical transmembrane spans lie at 21 to 36 (AVHI…WAGS), 101 to 115 (IVFS…TWHW), 140 to 156 (GIHL…FGAF), 203 to 218 (VAAG…FHLS), 237 to 252 (VLSS…AFIV), and 457 to 472 (TFAL…HGAR).

The protein belongs to the PsbB/PsbC family. PsbB subfamily. PSII is composed of 1 copy each of membrane proteins PsbA, PsbB, PsbC, PsbD, PsbE, PsbF, PsbH, PsbI, PsbJ, PsbK, PsbL, PsbM, PsbT, PsbX, PsbY, PsbZ, Psb30/Ycf12, at least 3 peripheral proteins of the oxygen-evolving complex and a large number of cofactors. It forms dimeric complexes. The cofactor is Binds multiple chlorophylls. PSII binds additional chlorophylls, carotenoids and specific lipids..

It is found in the plastid. Its subcellular location is the chloroplast thylakoid membrane. Its function is as follows. One of the components of the core complex of photosystem II (PSII). It binds chlorophyll and helps catalyze the primary light-induced photochemical processes of PSII. PSII is a light-driven water:plastoquinone oxidoreductase, using light energy to abstract electrons from H(2)O, generating O(2) and a proton gradient subsequently used for ATP formation. This chain is Photosystem II CP47 reaction center protein, found in Welwitschia mirabilis (Tree tumbo).